The chain runs to 198 residues: Probable GTP-binding protein EngB (198 aa).

The EngB-type G domain occupies 22 to 195 (HRNEVAFVGR…IDKLFLEFAT (174 aa)). GTP-binding positions include 30 to 37 (GRSNVGKS), 57 to 61 (GKTRL), 75 to 78 (DLPG), 142 to 145 (TKSD), and 174 to 176 (YSS). Mg(2+)-binding residues include serine 37 and threonine 59.

It belongs to the TRAFAC class TrmE-Era-EngA-EngB-Septin-like GTPase superfamily. EngB GTPase family. It depends on Mg(2+) as a cofactor.

Its function is as follows. Necessary for normal cell division and for the maintenance of normal septation. The sequence is that of Probable GTP-binding protein EngB from Clostridium botulinum (strain Eklund 17B / Type B).